Reading from the N-terminus, the 330-residue chain is Ribose-phosphate pyrophosphokinase (330 aa).

Position 55-57 (55-57 (DGE)) interacts with ATP. His-148 and Asp-187 together coordinate Mg(2+). Lys-211 is a catalytic residue. D-ribose 5-phosphate-binding positions include Arg-213, Asp-237, and 241 to 245 (DTGGT).

This sequence belongs to the ribose-phosphate pyrophosphokinase family. Class I subfamily. In terms of assembly, homohexamer. Mg(2+) is required as a cofactor.

It localises to the cytoplasm. It carries out the reaction D-ribose 5-phosphate + ATP = 5-phospho-alpha-D-ribose 1-diphosphate + AMP + H(+). The protein operates within metabolic intermediate biosynthesis; 5-phospho-alpha-D-ribose 1-diphosphate biosynthesis; 5-phospho-alpha-D-ribose 1-diphosphate from D-ribose 5-phosphate (route I): step 1/1. In terms of biological role, involved in the biosynthesis of the central metabolite phospho-alpha-D-ribosyl-1-pyrophosphate (PRPP) via the transfer of pyrophosphoryl group from ATP to 1-hydroxyl of ribose-5-phosphate (Rib-5-P). In Nostoc sp. (strain PCC 7120 / SAG 25.82 / UTEX 2576), this protein is Ribose-phosphate pyrophosphokinase.